The following is a 241-amino-acid chain: Fatty acid metabolism regulator protein (241 aa).

One can recognise an HTH gntR-type domain in the interval 11 to 79 (QSPAGLAEEY…HGKPTKVNNI (69 aa)). The segment at residues 39–58 (ERELAEKIGVTRTTLREVLQ) is a DNA-binding region (H-T-H motif).

Homodimer.

The protein localises to the cytoplasm. Functionally, multifunctional regulator of fatty acid metabolism. This chain is Fatty acid metabolism regulator protein, found in Pasteurella multocida (strain Pm70).